The chain runs to 155 residues: Small ribosomal subunit protein uS9 (155 aa).

This sequence belongs to the universal ribosomal protein uS9 family.

This Rhizobium meliloti (strain 1021) (Ensifer meliloti) protein is Small ribosomal subunit protein uS9.